Reading from the N-terminus, the 145-residue chain is Trafficking protein particle complex subunit 1 (145 aa).

It belongs to the TRAPP small subunits family. BET5 subfamily. Part of the multisubunit transport protein particle (TRAPP) complex. The heterodimer TRAPPC6B-TRAPPC3 interacts with TRAPPC1 likely providing a core for TRAPP complex formation.

It localises to the golgi apparatus. The protein localises to the cis-Golgi network. Its subcellular location is the endoplasmic reticulum. May play a role in vesicular transport from endoplasmic reticulum to Golgi. This Mus musculus (Mouse) protein is Trafficking protein particle complex subunit 1.